Consider the following 151-residue polypeptide: MSSRWYPIYQRGNPQLRVFLPNFWLKLVRPANEQPPNVVQFACSMEMTRHDVKNYLEKIYNVPVVNVRTRIALGGTKRDLVLGYITKEEDTKYAYVTLPRTKQFTFPDIFPTDAKQKIEDDKKSLEDAKKNHKKFLDKNKDRPGTPGWFSI.

A compositionally biased stretch (basic and acidic residues) spans 120 to 143 (DDKKSLEDAKKNHKKFLDKNKDRP). A disordered region spans residues 120–151 (DDKKSLEDAKKNHKKFLDKNKDRPGTPGWFSI).

This sequence belongs to the universal ribosomal protein uL23 family. As to quaternary structure, component of the mitochondrial ribosome large subunit (39S) which comprises a 16S rRNA and about 50 distinct proteins.

Its subcellular location is the mitochondrion. In Anopheles gambiae (African malaria mosquito), this protein is Large ribosomal subunit protein uL23m (mRpL23).